A 185-amino-acid polypeptide reads, in one-letter code: Ribosome-recycling factor (185 aa).

The protein belongs to the RRF family.

It is found in the cytoplasm. Its function is as follows. Responsible for the release of ribosomes from messenger RNA at the termination of protein biosynthesis. May increase the efficiency of translation by recycling ribosomes from one round of translation to another. In Roseiflexus castenholzii (strain DSM 13941 / HLO8), this protein is Ribosome-recycling factor.